The primary structure comprises 194 residues: dTTP/UTP pyrophosphatase (194 aa).

Asp-76 functions as the Proton acceptor in the catalytic mechanism.

Belongs to the Maf family. YhdE subfamily. A divalent metal cation serves as cofactor.

The protein resides in the cytoplasm. It carries out the reaction dTTP + H2O = dTMP + diphosphate + H(+). It catalyses the reaction UTP + H2O = UMP + diphosphate + H(+). Its function is as follows. Nucleoside triphosphate pyrophosphatase that hydrolyzes dTTP and UTP. May have a dual role in cell division arrest and in preventing the incorporation of modified nucleotides into cellular nucleic acids. This is dTTP/UTP pyrophosphatase from Shewanella sp. (strain MR-7).